The primary structure comprises 294 residues: N-acetylmuramic acid 6-phosphate etherase (294 aa).

The SIS domain occupies 54–217 (VIKSFEEEGR…STASMIGVGK (164 aa)). Glu82 acts as the Proton donor in catalysis. The active site involves Glu113.

This sequence belongs to the GCKR-like family. MurNAc-6-P etherase subfamily. In terms of assembly, homodimer.

It carries out the reaction N-acetyl-D-muramate 6-phosphate + H2O = N-acetyl-D-glucosamine 6-phosphate + (R)-lactate. Its pathway is amino-sugar metabolism; N-acetylmuramate degradation. Its function is as follows. Specifically catalyzes the cleavage of the D-lactyl ether substituent of MurNAc 6-phosphate, producing GlcNAc 6-phosphate and D-lactate. The chain is N-acetylmuramic acid 6-phosphate etherase from Bacillus cereus (strain ATCC 14579 / DSM 31 / CCUG 7414 / JCM 2152 / NBRC 15305 / NCIMB 9373 / NCTC 2599 / NRRL B-3711).